A 522-amino-acid polypeptide reads, in one-letter code: Subtilisin-like protease 10 (522 aa).

A signal peptide spans 1–19 (MFFFKGVVAVLSFFSAVNA). Residues 20 to 117 (APFMKPNNGT…VERDQIGTSQ (98 aa)) constitute a propeptide that is removed on maturation. The Inhibitor I9 domain occupies 36 to 113 (SYIVLLKRDI…HVAHVERDQI (78 aa)). The Peptidase S8 domain occupies 127-405 (NWGLGRLSNN…KLLVNGANGT (279 aa)). Catalysis depends on charge relay system residues aspartate 159 and histidine 190. Asparagine 251 is a glycosylation site (N-linked (GlcNAc...) asparagine). Serine 348 acts as the Charge relay system in catalysis. The segment covering 384–397 (ASVKNPGPNTTNKL) has biased composition (polar residues). Positions 384 to 515 (ASVKNPGPNT…GWNRPMWWNR (132 aa)) are disordered. Residues asparagine 392 and asparagine 403 are each glycosylated (N-linked (GlcNAc...) asparagine). Pro residues predominate over residues 432-459 (SQNPPPGQNPPPGQNPPPEQPAPSPPAN).

It belongs to the peptidase S8 family.

Its subcellular location is the secreted. In terms of biological role, secreted subtilisin-like serine protease with keratinolytic activity that contributes to pathogenicity. This is Subtilisin-like protease 10 (SUB10) from Arthroderma benhamiae (strain ATCC MYA-4681 / CBS 112371) (Trichophyton mentagrophytes).